A 151-amino-acid polypeptide reads, in one-letter code: UPF0178 protein YaiI (151 aa).

Belongs to the UPF0178 family.

In Salmonella paratyphi C (strain RKS4594), this protein is UPF0178 protein YaiI.